A 455-amino-acid chain; its full sequence is UDP-N-acetylmuramoylalanine--D-glutamate ligase (455 aa).

ATP is bound at residue 120–126; sequence GSNGKTT.

It belongs to the MurCDEF family.

Its subcellular location is the cytoplasm. The enzyme catalyses UDP-N-acetyl-alpha-D-muramoyl-L-alanine + D-glutamate + ATP = UDP-N-acetyl-alpha-D-muramoyl-L-alanyl-D-glutamate + ADP + phosphate + H(+). It participates in cell wall biogenesis; peptidoglycan biosynthesis. In terms of biological role, cell wall formation. Catalyzes the addition of glutamate to the nucleotide precursor UDP-N-acetylmuramoyl-L-alanine (UMA). The polypeptide is UDP-N-acetylmuramoylalanine--D-glutamate ligase (Pediococcus pentosaceus (strain ATCC 25745 / CCUG 21536 / LMG 10740 / 183-1w)).